We begin with the raw amino-acid sequence, 103 residues long: Small ribosomal subunit protein uS14c (103 aa).

The protein belongs to the universal ribosomal protein uS14 family. As to quaternary structure, part of the 30S ribosomal subunit.

Its subcellular location is the plastid. It is found in the chloroplast. In terms of biological role, binds 16S rRNA, required for the assembly of 30S particles. The polypeptide is Small ribosomal subunit protein uS14c (Oryza nivara (Indian wild rice)).